Here is an 865-residue protein sequence, read N- to C-terminus: Xylosyltransferase 2 (865 aa).

The Cytoplasmic portion of the chain corresponds to 1–15 (MVASARVQKLVRRYK). The helical; Signal-anchor for type II membrane protein transmembrane segment at 16–36 (LAIATALAILLLQGLVVWSFS) threads the bilayer. The Lumenal portion of the chain corresponds to 37–865 (GLEEDEAGEK…GPVKADGRLR (829 aa)). The segment at 41–157 (DEAGEKGRQR…EGAPQPTDNG (117 aa)) is disordered. Basic and acidic residues predominate over residues 53–65 (RPLDPGEGSKDTD). Over residues 73–82 (STGRRHGRWR) the composition is skewed to basic residues. The N-linked (GlcNAc...) asparagine glycan is linked to Asn122. Residues 125–137 (GAAAGEALVGAAG) are compositionally biased toward low complexity. 4 cysteine pairs are disulfide-bonded: Cys162–Cys190, Cys206–Cys448, Cys467–Cys480, and Cys469–Cys478. UDP-alpha-D-xylose is bound by residues Val239, Asp267, and 296–298 (TIW). An N-linked (GlcNAc...) asparagine glycan is attached at Asn327. Position 400 to 401 (400 to 401 (DW)) interacts with UDP-alpha-D-xylose. UDP-alpha-D-xylose is bound by residues Ser481 and 504 to 505 (RK). Disulfide bonds link Cys581-Cys833 and Cys826-Cys839. Asn683 carries an N-linked (GlcNAc...) asparagine glycan. The segment at 846–865 (SLSPDPKSELGPVKADGRLR) is disordered.

It belongs to the glycosyltransferase 14 family. XylT subfamily. In terms of assembly, monomer. Mg(2+) is required as a cofactor. It depends on Mn(2+) as a cofactor. Post-translationally, contains disulfide bonds. As to expression, widely expressed. Expressed at higher level in kidney and pancreas.

The protein resides in the golgi apparatus membrane. It is found in the secreted. It catalyses the reaction UDP-alpha-D-xylose + L-seryl-[protein] = 3-O-(beta-D-xylosyl)-L-seryl-[protein] + UDP + H(+). The protein operates within glycan metabolism; chondroitin sulfate biosynthesis. It functions in the pathway glycan metabolism; heparan sulfate biosynthesis. In terms of biological role, catalyzes the first step in the biosynthesis of chondroitin sulfate, heparan sulfate and dermatan sulfate proteoglycans, such as DCN. Transfers D-xylose from UDP-D-xylose to specific serine residues of the core protein. In Homo sapiens (Human), this protein is Xylosyltransferase 2 (XYLT2).